A 180-amino-acid chain; its full sequence is Nascent polypeptide-associated complex subunit alpha (180 aa).

The 65-residue stretch at 16–80 (SKNEKKAREL…AKVDDMNKRI (65 aa)) folds into the NAC-A/B domain. Residues 81-113 (AEAQQQQAQQDALSKAAGETGEAGEEDKSQDAI) form a disordered region. Residues 82–100 (EAQQQQAQQDALSKAAGET) are compositionally biased toward low complexity. Positions 142-179 (LDAKDIDIIVEQTQVSRAKAVKALRVHDGDMVNAIMEL) constitute a UBA domain.

This sequence belongs to the NAC-alpha family. Part of the nascent polypeptide-associated complex (NAC), consisting of EGD2 and EGD1. NAC associates with ribosomes via EGD1.

The protein localises to the cytoplasm. It localises to the nucleus. Component of the nascent polypeptide-associated complex (NAC), a dynamic component of the ribosomal exit tunnel, protecting the emerging polypeptides from interaction with other cytoplasmic proteins to ensure appropriate nascent protein targeting. The NAC complex also promotes mitochondrial protein import by enhancing productive ribosome interactions with the outer mitochondrial membrane and blocks the inappropriate interaction of ribosomes translating non-secretory nascent polypeptides with translocation sites in the membrane of the endoplasmic reticulum. EGD2 may also be involved in transcription regulation. This is Nascent polypeptide-associated complex subunit alpha (EGD2) from Debaryomyces hansenii (strain ATCC 36239 / CBS 767 / BCRC 21394 / JCM 1990 / NBRC 0083 / IGC 2968) (Yeast).